Here is a 233-residue protein sequence, read N- to C-terminus: Hydroxyacylglutathione hydrolase (233 aa).

Residues H52, H54, D56, H57, H108, D125, and H163 each contribute to the Zn(2+) site.

It belongs to the metallo-beta-lactamase superfamily. Glyoxalase II family. As to quaternary structure, monomer. The cofactor is Zn(2+).

The enzyme catalyses an S-(2-hydroxyacyl)glutathione + H2O = a 2-hydroxy carboxylate + glutathione + H(+). It participates in secondary metabolite metabolism; methylglyoxal degradation; (R)-lactate from methylglyoxal: step 2/2. In terms of biological role, thiolesterase that catalyzes the hydrolysis of S-D-lactoyl-glutathione to form glutathione and D-lactic acid. The protein is Hydroxyacylglutathione hydrolase of Histophilus somni (strain 2336) (Haemophilus somnus).